Here is a 246-residue protein sequence, read N- to C-terminus: Pyridoxine 5'-phosphate synthase (246 aa).

Asn-12 is a binding site for 3-amino-2-oxopropyl phosphate. A 1-deoxy-D-xylulose 5-phosphate-binding site is contributed by 14–15 (DH). 3-amino-2-oxopropyl phosphate is bound at residue Arg-23. His-48 serves as the catalytic Proton acceptor. 1-deoxy-D-xylulose 5-phosphate contacts are provided by Arg-50 and His-55. Residue Glu-75 is the Proton acceptor of the active site. Position 105 (Thr-105) interacts with 1-deoxy-D-xylulose 5-phosphate. The active-site Proton donor is His-196. Residues Gly-197 and 218-219 (GH) contribute to the 3-amino-2-oxopropyl phosphate site.

Belongs to the PNP synthase family. As to quaternary structure, homooctamer; tetramer of dimers.

The protein resides in the cytoplasm. The enzyme catalyses 3-amino-2-oxopropyl phosphate + 1-deoxy-D-xylulose 5-phosphate = pyridoxine 5'-phosphate + phosphate + 2 H2O + H(+). Its pathway is cofactor biosynthesis; pyridoxine 5'-phosphate biosynthesis; pyridoxine 5'-phosphate from D-erythrose 4-phosphate: step 5/5. In terms of biological role, catalyzes the complicated ring closure reaction between the two acyclic compounds 1-deoxy-D-xylulose-5-phosphate (DXP) and 3-amino-2-oxopropyl phosphate (1-amino-acetone-3-phosphate or AAP) to form pyridoxine 5'-phosphate (PNP) and inorganic phosphate. The polypeptide is Pyridoxine 5'-phosphate synthase (Nitrosococcus oceani (strain ATCC 19707 / BCRC 17464 / JCM 30415 / NCIMB 11848 / C-107)).